A 424-amino-acid polypeptide reads, in one-letter code: Histidine--tRNA ligase (424 aa).

Belongs to the class-II aminoacyl-tRNA synthetase family. In terms of assembly, homodimer.

Its subcellular location is the cytoplasm. The catalysed reaction is tRNA(His) + L-histidine + ATP = L-histidyl-tRNA(His) + AMP + diphosphate + H(+). In Bacillus subtilis (strain 168), this protein is Histidine--tRNA ligase (hisS).